Reading from the N-terminus, the 540-residue chain is Probable pectinesterase/pectinesterase inhibitor 60 (540 aa).

The first 31 residues, 1-31, serve as a signal peptide directing secretion; that stretch reads MNIMMVQNISFLSLHLLLILLLCLRPLTTVA. A pectinesterase inhibitor 60 region spans residues 32–185; it reads DGNSTNIDGW…SHLISNCLAV (154 aa). N-linked (GlcNAc...) asparagine glycans are attached at residues asparagine 34, asparagine 91, asparagine 95, asparagine 120, asparagine 161, and asparagine 195. Residues 225–526 are pectinesterase 60; that stretch reads NLVVAKDGSG…FSVGKFIAGT (302 aa). 2 residues coordinate substrate: threonine 302 and glutamine 332. Catalysis depends on aspartate 355, which acts as the Proton donor; for pectinesterase activity. Residues cysteine 369 and cysteine 389 are joined by a disulfide bond. The active-site Nucleophile; for pectinesterase activity is aspartate 376. Substrate is bound by residues arginine 444 and tryptophan 446.

In the N-terminal section; belongs to the PMEI family. It in the C-terminal section; belongs to the pectinesterase family. In terms of tissue distribution, expressed in siliques.

It localises to the secreted. It is found in the cell wall. It catalyses the reaction [(1-&gt;4)-alpha-D-galacturonosyl methyl ester](n) + n H2O = [(1-&gt;4)-alpha-D-galacturonosyl](n) + n methanol + n H(+). Its pathway is glycan metabolism; pectin degradation; 2-dehydro-3-deoxy-D-gluconate from pectin: step 1/5. Functionally, acts in the modification of cell walls via demethylesterification of cell wall pectin. This Arabidopsis thaliana (Mouse-ear cress) protein is Probable pectinesterase/pectinesterase inhibitor 60 (PME60).